A 96-amino-acid polypeptide reads, in one-letter code: Keratin-associated protein 12-3 (96 aa).

Repeat copies occupy residues 10–14, 15–19, 24–28, 30–34, 35–39, 45–49, 50–54, 55–59, 60–64, 70–74, 75–79, 80–84, 85–89, and 90–94. Residues 10–94 are 14 X 5 AA approximate repeats; that stretch reads CQPTCCIHSP…CRPISCSTPS (85 aa).

The protein belongs to the KRTAP type 12 family. Interacts with hair keratins. In terms of tissue distribution, restricted to a narrow region of the hair fiber cuticle, lying approximately 20 cell layers above the apex of the dermal papilla of the hair root; not detected in any other tissues.

Functionally, in the hair cortex, hair keratin intermediate filaments are embedded in an interfilamentous matrix, consisting of hair keratin-associated proteins (KRTAP), which are essential for the formation of a rigid and resistant hair shaft through their extensive disulfide bond cross-linking with abundant cysteine residues of hair keratins. The matrix proteins include the high-sulfur and high-glycine-tyrosine keratins. The sequence is that of Keratin-associated protein 12-3 (KRTAP12-3) from Homo sapiens (Human).